The primary structure comprises 469 residues: Glutamate--tRNA ligase (469 aa).

A 'HIGH' region motif is present at residues 11–21; it reads PSPTGFIHLGN. The 'KMSKS' region motif lies at 243–247; the sequence is KMSKR. An ATP-binding site is contributed by lysine 246.

Belongs to the class-I aminoacyl-tRNA synthetase family. Glutamate--tRNA ligase type 1 subfamily. Monomer.

It localises to the cytoplasm. The catalysed reaction is tRNA(Glu) + L-glutamate + ATP = L-glutamyl-tRNA(Glu) + AMP + diphosphate. Functionally, catalyzes the attachment of glutamate to tRNA(Glu) in a two-step reaction: glutamate is first activated by ATP to form Glu-AMP and then transferred to the acceptor end of tRNA(Glu). This chain is Glutamate--tRNA ligase, found in Burkholderia cenocepacia (strain HI2424).